Consider the following 593-residue polypeptide: DNA primase (593 aa).

The segment at 38-62 (CPFHQEKTPSFTVSDSKRFFYCFGC) adopts a CHC2-type zinc-finger fold. One can recognise a Toprim domain in the interval 250-332 (NRSILVEGYF…EKKISFIRLP (83 aa)). Mg(2+) contacts are provided by glutamate 256, aspartate 300, and aspartate 302.

Belongs to the DnaG primase family. As to quaternary structure, monomer. Interacts with DnaB. Requires Zn(2+) as cofactor. It depends on Mg(2+) as a cofactor.

The enzyme catalyses ssDNA + n NTP = ssDNA/pppN(pN)n-1 hybrid + (n-1) diphosphate.. Its function is as follows. RNA polymerase that catalyzes the synthesis of short RNA molecules used as primers for DNA polymerase during DNA replication. The chain is DNA primase from Rickettsia prowazekii (strain Madrid E).